Here is a 113-residue protein sequence, read N- to C-terminus: uncharacterized protein (113 aa).

Helical transmembrane passes span F25 to I45 and F49 to W69.

It is found in the host membrane. This is an uncharacterized protein from Spiroplasma citri (SpV1).